The primary structure comprises 317 residues: 4-hydroxy-3-methylbut-2-enyl diphosphate reductase (317 aa).

Cys-12 provides a ligand contact to [4Fe-4S] cluster. (2E)-4-hydroxy-3-methylbut-2-enyl diphosphate is bound by residues His-41 and His-74. Residues His-41 and His-74 each coordinate dimethylallyl diphosphate. Residues His-41 and His-74 each contribute to the isopentenyl diphosphate site. Cys-96 lines the [4Fe-4S] cluster pocket. His-124 lines the (2E)-4-hydroxy-3-methylbut-2-enyl diphosphate pocket. His-124 provides a ligand contact to dimethylallyl diphosphate. Residue His-124 coordinates isopentenyl diphosphate. Glu-126 functions as the Proton donor in the catalytic mechanism. Thr-168 provides a ligand contact to (2E)-4-hydroxy-3-methylbut-2-enyl diphosphate. Cys-198 contacts [4Fe-4S] cluster. (2E)-4-hydroxy-3-methylbut-2-enyl diphosphate contacts are provided by Ser-226, Ser-227, Asn-228, and Ser-270. Dimethylallyl diphosphate contacts are provided by Ser-226, Ser-227, Asn-228, and Ser-270. Ser-226, Ser-227, Asn-228, and Ser-270 together coordinate isopentenyl diphosphate.

This sequence belongs to the IspH family. Requires [4Fe-4S] cluster as cofactor.

It carries out the reaction isopentenyl diphosphate + 2 oxidized [2Fe-2S]-[ferredoxin] + H2O = (2E)-4-hydroxy-3-methylbut-2-enyl diphosphate + 2 reduced [2Fe-2S]-[ferredoxin] + 2 H(+). The catalysed reaction is dimethylallyl diphosphate + 2 oxidized [2Fe-2S]-[ferredoxin] + H2O = (2E)-4-hydroxy-3-methylbut-2-enyl diphosphate + 2 reduced [2Fe-2S]-[ferredoxin] + 2 H(+). Its pathway is isoprenoid biosynthesis; dimethylallyl diphosphate biosynthesis; dimethylallyl diphosphate from (2E)-4-hydroxy-3-methylbutenyl diphosphate: step 1/1. It participates in isoprenoid biosynthesis; isopentenyl diphosphate biosynthesis via DXP pathway; isopentenyl diphosphate from 1-deoxy-D-xylulose 5-phosphate: step 6/6. Catalyzes the conversion of 1-hydroxy-2-methyl-2-(E)-butenyl 4-diphosphate (HMBPP) into a mixture of isopentenyl diphosphate (IPP) and dimethylallyl diphosphate (DMAPP). Acts in the terminal step of the DOXP/MEP pathway for isoprenoid precursor biosynthesis. The protein is 4-hydroxy-3-methylbut-2-enyl diphosphate reductase of Chromohalobacter salexigens (strain ATCC BAA-138 / DSM 3043 / CIP 106854 / NCIMB 13768 / 1H11).